We begin with the raw amino-acid sequence, 806 residues long: Enhancer of polycomb-like protein 1 (806 aa).

2 disordered regions span residues A403–G461 and S751–A806. Residues K411–K420 show a composition bias toward basic residues. Residues L421 to K439 show a composition bias toward basic and acidic residues. A compositionally biased stretch (low complexity) spans S751 to H779. Residues N785–P795 are compositionally biased toward polar residues.

It belongs to the enhancer of polycomb family. Component of the NuA4 histone acetyltransferase complex.

The protein resides in the nucleus. Component of the NuA4 histone acetyltransferase complex which is involved in transcriptional activation of selected genes principally by acetylation of nucleosomal histone H4 and H2A. The NuA4 complex is also involved in DNA repair. Involved in gene silencing by neighboring heterochromatin, blockage of the silencing spreading along the chromosome, and required for cell cycle progression through G2/M. This chain is Enhancer of polycomb-like protein 1 (EPL1), found in Kluyveromyces lactis (strain ATCC 8585 / CBS 2359 / DSM 70799 / NBRC 1267 / NRRL Y-1140 / WM37) (Yeast).